The sequence spans 469 residues: Serine hydroxymethyltransferase, cytosolic (469 aa).

N6-(pyridoxal phosphate)lysine is present on K248.

Belongs to the SHMT family. In terms of assembly, homotetramer. It depends on pyridoxal 5'-phosphate as a cofactor.

Its subcellular location is the cytoplasm. It catalyses the reaction (6R)-5,10-methylene-5,6,7,8-tetrahydrofolate + glycine + H2O = (6S)-5,6,7,8-tetrahydrofolate + L-serine. Its pathway is one-carbon metabolism; tetrahydrofolate interconversion. Its function is as follows. Interconversion of serine and glycine. In Candida glabrata (strain ATCC 2001 / BCRC 20586 / JCM 3761 / NBRC 0622 / NRRL Y-65 / CBS 138) (Yeast), this protein is Serine hydroxymethyltransferase, cytosolic (SHM2).